A 236-amino-acid polypeptide reads, in one-letter code: Phosphoribosylaminoimidazole-succinocarboxamide synthase (236 aa).

This sequence belongs to the SAICAR synthetase family.

It catalyses the reaction 5-amino-1-(5-phospho-D-ribosyl)imidazole-4-carboxylate + L-aspartate + ATP = (2S)-2-[5-amino-1-(5-phospho-beta-D-ribosyl)imidazole-4-carboxamido]succinate + ADP + phosphate + 2 H(+). The protein operates within purine metabolism; IMP biosynthesis via de novo pathway; 5-amino-1-(5-phospho-D-ribosyl)imidazole-4-carboxamide from 5-amino-1-(5-phospho-D-ribosyl)imidazole-4-carboxylate: step 1/2. In Campylobacter jejuni subsp. jejuni serotype O:2 (strain ATCC 700819 / NCTC 11168), this protein is Phosphoribosylaminoimidazole-succinocarboxamide synthase.